Here is a 162-residue protein sequence, read N- to C-terminus: NADH-quinone oxidoreductase subunit E (162 aa).

The [2Fe-2S] cluster site is built by Cys88, Cys93, Cys129, and Cys133.

It belongs to the complex I 24 kDa subunit family. Composed of 13 different subunits. Subunits NuoCD, E, F, and G constitute the peripheral sector of the complex. The cofactor is [2Fe-2S] cluster.

The enzyme catalyses a quinone + NADH + 5 H(+)(in) = a quinol + NAD(+) + 4 H(+)(out). In terms of biological role, NDH-1 shuttles electrons from NADH, via FMN and iron-sulfur (Fe-S) centers, to quinones in the respiratory chain. Couples the redox reaction to proton translocation (for every two electrons transferred, four hydrogen ions are translocated across the cytoplasmic membrane), and thus conserves the redox energy in a proton gradient. In Buchnera aphidicola subsp. Acyrthosiphon pisum (strain APS) (Acyrthosiphon pisum symbiotic bacterium), this protein is NADH-quinone oxidoreductase subunit E (nuoE).